The following is a 234-amino-acid chain: ATP-dependent dethiobiotin synthetase BioD (234 aa).

An ATP-binding site is contributed by 12–17 (DVGKTI). T16 serves as a coordination point for Mg(2+). K37 is a catalytic residue. Residue T41 participates in substrate binding. ATP is bound by residues D54 and 115 to 118 (EGAG). Residues D54 and E115 each coordinate Mg(2+).

Belongs to the dethiobiotin synthetase family. In terms of assembly, homodimer. Mg(2+) is required as a cofactor.

It localises to the cytoplasm. The catalysed reaction is (7R,8S)-7,8-diammoniononanoate + CO2 + ATP = (4R,5S)-dethiobiotin + ADP + phosphate + 3 H(+). It participates in cofactor biosynthesis; biotin biosynthesis; biotin from 7,8-diaminononanoate: step 1/2. In terms of biological role, catalyzes a mechanistically unusual reaction, the ATP-dependent insertion of CO2 between the N7 and N8 nitrogen atoms of 7,8-diaminopelargonic acid (DAPA, also called 7,8-diammoniononanoate) to form a ureido ring. The sequence is that of ATP-dependent dethiobiotin synthetase BioD from Lysinibacillus sphaericus (strain C3-41).